Consider the following 239-residue polypeptide: Probable transcriptional regulatory protein Sca_0317 (239 aa).

It belongs to the TACO1 family. YeeN subfamily.

The protein resides in the cytoplasm. In Staphylococcus carnosus (strain TM300), this protein is Probable transcriptional regulatory protein Sca_0317.